The following is a 286-amino-acid chain: Polyamine aminopropyltransferase (286 aa).

One can recognise a PABS domain in the interval 5-238 (KTWHEKLYCH…GVMVFAWGTN (234 aa)). The spermidine site is built by His64 and Asp88. Residues Glu108 and 140–141 (DG) contribute to the S-methyl-5'-thioadenosine site. Asp158 acts as the Proton acceptor in catalysis. 158–161 (DSTD) is a spermidine binding site.

The protein belongs to the spermidine/spermine synthase family. Homodimer or homotetramer.

It is found in the cytoplasm. It catalyses the reaction S-adenosyl 3-(methylsulfanyl)propylamine + putrescine = S-methyl-5'-thioadenosine + spermidine + H(+). It participates in amine and polyamine biosynthesis; spermidine biosynthesis; spermidine from putrescine: step 1/1. Catalyzes the irreversible transfer of a propylamine group from the amino donor S-adenosylmethioninamine (decarboxy-AdoMet) to putrescine (1,4-diaminobutane) to yield spermidine. This Buchnera aphidicola subsp. Acyrthosiphon pisum (strain 5A) protein is Polyamine aminopropyltransferase.